We begin with the raw amino-acid sequence, 563 residues long: Methylcrotonoyl-CoA carboxylase beta chain, mitochondrial (563 aa).

Residues 1–22 (MWGALRSALRPCCRAAVPPQRA) constitute a mitochondrion transit peptide. The 258-residue stretch at 49–306 (MKALVSQLHE…QKKMDVTIEP (258 aa)) folds into the CoA carboxyltransferase N-terminal domain. The segment at 49-555 (MKALVSQLHE…SAALNAPIQR (507 aa)) is carboxyltransferase. At K70 the chain carries N6-acetyllysine; alternate. An N6-succinyllysine; alternate modification is found at K70. K141 bears the N6-succinyllysine mark. Residues 309–555 (EPLFPADELY…SAALNAPIQR (247 aa)) form the CoA carboxyltransferase C-terminal domain. An acyl-CoA binding region spans residues 343-372 (RFNEFKALYGDTLVTGFARIFGYPVGIIGN). K433 is subject to N6-succinyllysine. Position 495 is an N6-acetyllysine; alternate (K495). The residue at position 495 (K495) is an N6-succinyllysine; alternate. K511 carries the N6-acetyllysine modification.

This sequence belongs to the AccD/PCCB family. As to quaternary structure, probably a dodecamer composed of six biotin-containing alpha subunits (MCCC1) and six beta (MCCC2) subunits.

It is found in the mitochondrion matrix. It catalyses the reaction 3-methylbut-2-enoyl-CoA + hydrogencarbonate + ATP = 3-methyl-(2E)-glutaconyl-CoA + ADP + phosphate + H(+). Its pathway is amino-acid degradation; L-leucine degradation; (S)-3-hydroxy-3-methylglutaryl-CoA from 3-isovaleryl-CoA: step 2/3. Carboxyltransferase subunit of the 3-methylcrotonyl-CoA carboxylase, an enzyme that catalyzes the conversion of 3-methylcrotonyl-CoA to 3-methylglutaconyl-CoA, a critical step for leucine and isovaleric acid catabolism. This is Methylcrotonoyl-CoA carboxylase beta chain, mitochondrial (Mccc2) from Mus musculus (Mouse).